The following is a 100-amino-acid chain: Urease subunit gamma (100 aa).

This sequence belongs to the urease gamma subunit family. In terms of assembly, heterotrimer of UreA (gamma), UreB (beta) and UreC (alpha) subunits. Three heterotrimers associate to form the active enzyme.

Its subcellular location is the cytoplasm. It catalyses the reaction urea + 2 H2O + H(+) = hydrogencarbonate + 2 NH4(+). The protein operates within nitrogen metabolism; urea degradation; CO(2) and NH(3) from urea (urease route): step 1/1. This is Urease subunit gamma from Synechocystis sp. (strain ATCC 27184 / PCC 6803 / Kazusa).